An 87-amino-acid chain; its full sequence is Toxin CngtIII (87 aa).

The N-terminal stretch at 1–19 (MNSLLMITACLVLFGTVWA) is a signal peptide. The region spanning 20–85 (KEGYLVNKST…TYPLPNKTCS (66 aa)) is the LCN-type CS-alpha/beta domain. Intrachain disulfides connect Cys-31–Cys-84, Cys-35–Cys-60, Cys-44–Cys-65, and Cys-48–Cys-67.

It belongs to the long (4 C-C) scorpion toxin superfamily. Sodium channel inhibitor family. Beta subfamily. As to expression, expressed by the venom gland.

It localises to the secreted. Functionally, beta toxins bind voltage-independently at site-4 of sodium channels (Nav) and shift the voltage of activation toward more negative potentials thereby affecting sodium channel activation and promoting spontaneous and repetitive firing. This is Toxin CngtIII from Centruroides noxius (Mexican scorpion).